The following is a 241-amino-acid chain: Carboxy-S-adenosyl-L-methionine synthase (241 aa).

S-adenosyl-L-methionine contacts are provided by residues Tyr-38, 63-65 (GCS), 88-89 (DN), 116-117 (DI), Asn-131, and Arg-198.

Belongs to the class I-like SAM-binding methyltransferase superfamily. Cx-SAM synthase family. In terms of assembly, homodimer.

It catalyses the reaction prephenate + S-adenosyl-L-methionine = carboxy-S-adenosyl-L-methionine + 3-phenylpyruvate + H2O. In terms of biological role, catalyzes the conversion of S-adenosyl-L-methionine (SAM) to carboxy-S-adenosyl-L-methionine (Cx-SAM). In Actinobacillus pleuropneumoniae serotype 3 (strain JL03), this protein is Carboxy-S-adenosyl-L-methionine synthase.